We begin with the raw amino-acid sequence, 388 residues long: Protochlorophyllide reductase A, chloroplastic (388 aa).

Residues 1–74 constitute a chloroplast transit peptide; sequence MALQLLPSTL…KPSGKKTLRQ (74 aa).

It belongs to the short-chain dehydrogenases/reductases (SDR) family. POR subfamily.

The protein resides in the plastid. The protein localises to the chloroplast. It catalyses the reaction chlorophyllide a + NADP(+) = protochlorophyllide a + NADPH + H(+). It functions in the pathway porphyrin-containing compound metabolism; chlorophyll biosynthesis. Phototransformation of protochlorophyllide (Pchlide) to chlorophyllide (Chlide). In Triticum aestivum (Wheat), this protein is Protochlorophyllide reductase A, chloroplastic (PORA).